We begin with the raw amino-acid sequence, 368 residues long: Galactoside 2-alpha-L-fucosyltransferase SEC1 (368 aa).

Positions 1–20 are disordered; that stretch reads MWDMRAVAPQRPAAGHPRAG. The Cytoplasmic portion of the chain corresponds to 1–31; that stretch reads MWDMRAVAPQRPAAGHPRAGWPRKLKTAATR. Residues 32–52 form a helical membrane-spanning segment; that stretch reads FWATCPSSSTVCFLFVIFAVS. Topologically, residues 53 to 368 are lumenal; it reads TVFHCHRRLA…NLGQARESHP (316 aa).

It belongs to the glycosyltransferase 11 family. Kidney.

It localises to the golgi apparatus. Its subcellular location is the golgi stack membrane. The catalysed reaction is a ganglioside GM1 + GDP-beta-L-fucose = a ganglioside Fuc-GM1 + GDP + H(+). It participates in protein modification; protein glycosylation. Its function is as follows. Catalyzes the transfer of alpha 1,2-linked fucose to ganglioside GM1 and galacto-N-biose. The sequence is that of Galactoside 2-alpha-L-fucosyltransferase SEC1 from Bos taurus (Bovine).